The sequence spans 156 residues: Small ribosomal subunit protein uS7 (156 aa).

This sequence belongs to the universal ribosomal protein uS7 family. In terms of assembly, part of the 30S ribosomal subunit. Contacts proteins S9 and S11.

Functionally, one of the primary rRNA binding proteins, it binds directly to 16S rRNA where it nucleates assembly of the head domain of the 30S subunit. Is located at the subunit interface close to the decoding center, probably blocks exit of the E-site tRNA. The chain is Small ribosomal subunit protein uS7 from Allorhizobium ampelinum (strain ATCC BAA-846 / DSM 112012 / S4) (Agrobacterium vitis (strain S4)).